A 377-amino-acid chain; its full sequence is Histidinol-phosphate aminotransferase (377 aa).

At lysine 230 the chain carries N6-(pyridoxal phosphate)lysine.

It belongs to the class-II pyridoxal-phosphate-dependent aminotransferase family. Histidinol-phosphate aminotransferase subfamily. Homodimer. Pyridoxal 5'-phosphate is required as a cofactor.

The enzyme catalyses L-histidinol phosphate + 2-oxoglutarate = 3-(imidazol-4-yl)-2-oxopropyl phosphate + L-glutamate. The protein operates within amino-acid biosynthesis; L-histidine biosynthesis; L-histidine from 5-phospho-alpha-D-ribose 1-diphosphate: step 7/9. The chain is Histidinol-phosphate aminotransferase from Mycobacterium leprae (strain Br4923).